The sequence spans 192 residues: UPF0301 protein Jann_3896 (192 aa).

It belongs to the UPF0301 (AlgH) family.

This chain is UPF0301 protein Jann_3896, found in Jannaschia sp. (strain CCS1).